We begin with the raw amino-acid sequence, 647 residues long: MACSLQKLFAVEEEFEDEDFLSAVEDAENRFTGSLPVNAGRLRPVSSRPQETVQAQSSRLLLLHPTAPSEALGLPDLDLCLPASSTPSADSRPSCIGAAPLRPVSTSSSWIGNQRRVTVTEVLRETARPQSSALHPLLTFESQQQQVGGFEGPEQDEFDKVLASMELEEPGMELECGVSSEAIPILPAQQREGSVLAKKARVVDLSGSCQKGPVPAIHKAGIMSAQDESLDPVIQCRTPRPPLRPGAVGHLPVPTALTVPTQQLHWEVCPQRSPVQALQPLQAARGTIQSSPQNRFPCQPFQSPSSWLSGKAHLPRPRTPNSSCSTPSRTSSGLFPRIPLQPQAPVSSIGSPVGTPKGPQGALQTPIVTNHLVQLVTAASRTPQQPTHPSTRAKTRRFPGPAGILPHQQSGRSLEDIMVSAPQTPTHGALAKFQTEIVASSQASVEEDFGRGPWLTMKSTLGLDERDPSCFLCTYSIVMVLRKQAALKQLPRNKVPNMAVMIKSLTRSTMDASVVFKDPTGEMQGTVHRLLLETCQNELKPGSVLLLKQIGVFSPSLRNHYLNVTPNNLVHIYSPDSGDGSFLKPSQPFPKDSGSFQHDVAAKPEEGFRTAQNLEAEASPEEELPEADDLDGLLSELPEDFFCGTSS.

The residue at position 47 (Ser-47) is a Phosphoserine. Disordered stretches follow at residues 284-361, 380-399, and 581-631; these read ARGT…GPQG, SRTP…RRFP, and SFLK…DDLD. Arg-285, Arg-295, Arg-329, and Arg-337 each carry asymmetric dimethylarginine. Positions 287–308 are enriched in polar residues; that stretch reads TIQSSPQNRFPCQPFQSPSSWL. The span at 319 to 332 shows a compositional bias: low complexity; sequence TPNSSCSTPSRTSS. The span at 380 to 390 shows a compositional bias: polar residues; sequence SRTPQQPTHPS. Acidic residues predominate over residues 618–631; the sequence is ASPEEELPEADDLD.

In terms of assembly, interacts with MCM8; this interaction is necessary for MCM8-MCM9 helicase complex recruitment to DNA damage sites. Interacts with RPA1; this interaction associates HROB with the RPA complex.

The protein resides in the nucleus. It localises to the chromosome. Functionally, DNA-binding protein involved in homologous recombination that acts by recruiting the MCM8-MCM9 helicase complex to sites of DNA damage to promote DNA repair synthesis. In Homo sapiens (Human), this protein is Homologous recombination OB-fold protein.